The following is a 552-amino-acid chain: 5'-AMP-activated protein kinase catalytic subunit alpha-2 (552 aa).

Residues 16 to 268 form the Protein kinase domain; it reads YVLGDTLGVG…IKDIREHEWF (253 aa). Residues 22-30 and K45 each bind ATP; that span reads LGVGTFGKV. Catalysis depends on D139, which acts as the Proton acceptor. T172 is subject to Phosphothreonine; by LKB1 and CaMKK2. At T258 the chain carries Phosphothreonine. The interval 291 to 376 is AIS; that stretch reads EAVKEVCEKF…PERMPPLIAD (86 aa). S377 carries the phosphoserine modification. The interval 477–521 is disordered; the sequence is VEQRSGSSTPQRSCSAAGLHRPRSSFDSTTAESHSLSGSLTGSLT. The span at 480–490 shows a compositional bias: polar residues; sequence RSGSSTPQRSC. Residue S491 is modified to Phosphoserine. The segment covering 501 to 510 has biased composition (polar residues); it reads SFDSTTAESH. The span at 511-521 shows a compositional bias: low complexity; it reads SLSGSLTGSLT.

Belongs to the protein kinase superfamily. CAMK Ser/Thr protein kinase family. SNF1 subfamily. As to quaternary structure, AMPK is a heterotrimer of an alpha catalytic subunit (PRKAA1 or PRKAA2), a beta (PRKAB1 or PRKAB2) and a gamma non-catalytic subunits (PRKAG1, PRKAG2 or PRKAG3). Interacts with FNIP1 and FNIP2. Interacts with DUSP29. Interacts with ARF6. The phosphorylated form at Thr-172 mediated by CamKK2 interacts with ACSS2. The cofactor is Mg(2+). In terms of processing, ubiquitinated. Phosphorylated at Thr-172 by STK11/LKB1 in complex with STE20-related adapter-alpha (STRADA) pseudo kinase and CAB39. Also phosphorylated at Thr-172 by CAMKK2; triggered by a rise in intracellular calcium ions, without detectable changes in the AMP/ATP ratio. CAMKK1 can also phosphorylate Thr-172, but at much lower level. Dephosphorylated by protein phosphatase 2A and 2C (PP2A and PP2C). Phosphorylated by ULK1; leading to negatively regulate AMPK activity and suggesting the existence of a regulatory feedback loop between ULK1 and AMPK. Dephosphorylated by PPM1A and PPM1B at Thr-172 (mediated by STK11/LKB1).

Its subcellular location is the cytoplasm. It is found in the nucleus. It catalyses the reaction L-seryl-[protein] + ATP = O-phospho-L-seryl-[protein] + ADP + H(+). The catalysed reaction is L-threonyl-[protein] + ATP = O-phospho-L-threonyl-[protein] + ADP + H(+). The enzyme catalyses L-seryl-[acetyl-CoA carboxylase] + ATP = O-phospho-L-seryl-[acetyl-CoA carboxylase] + ADP + H(+). It carries out the reaction L-seryl-[3-hydroxy-3-methylglutaryl-coenzyme A reductase] + ATP = O-phospho-L-seryl-[3-hydroxy-3-methylglutaryl-coenzyme A reductase] + ADP + H(+). Activated by phosphorylation on Thr-172. Binding of AMP to non-catalytic gamma subunit (PRKAG1, PRKAG2 or PRKAG3) results in allosteric activation, inducing phosphorylation on Thr-172. AMP-binding to gamma subunit also sustains activity by preventing dephosphorylation of Thr-172. ADP also stimulates Thr-172 phosphorylation, without stimulating already phosphorylated AMPK. ATP promotes dephosphorylation of Thr-172, rendering the enzyme inactive. Under physiological conditions AMPK mainly exists in its inactive form in complex with ATP, which is much more abundant than AMP. Selectively inhibited by compound C (6-[4-(2-Piperidin-1-yl-ethoxy)-phenyl)]-3-pyridin-4-yl-pyyrazolo[1,5-a] pyrimidine. Activated by resveratrol, a natural polyphenol present in red wine, and S17834, a synthetic polyphenol. Salicylate/aspirin directly activates kinase activity, primarily by inhibiting Thr-172 dephosphorylation. Catalytic subunit of AMP-activated protein kinase (AMPK), an energy sensor protein kinase that plays a key role in regulating cellular energy metabolism. In response to reduction of intracellular ATP levels, AMPK activates energy-producing pathways and inhibits energy-consuming processes: inhibits protein, carbohydrate and lipid biosynthesis, as well as cell growth and proliferation. AMPK acts via direct phosphorylation of metabolic enzymes, and by longer-term effects via phosphorylation of transcription regulators. Regulates lipid synthesis by phosphorylating and inactivating lipid metabolic enzymes such as ACACA, ACACB, GYS1, HMGCR and LIPE; regulates fatty acid and cholesterol synthesis by phosphorylating acetyl-CoA carboxylase (ACACA and ACACB) and hormone-sensitive lipase (LIPE) enzymes, respectively. Promotes lipolysis of lipid droplets by mediating phosphorylation of isoform 1 of CHKA (CHKalpha2). Regulates insulin-signaling and glycolysis by phosphorylating IRS1, PFKFB2 and PFKFB3. Involved in insulin receptor/INSR internalization. AMPK stimulates glucose uptake in muscle by increasing the translocation of the glucose transporter SLC2A4/GLUT4 to the plasma membrane, possibly by mediating phosphorylation of TBC1D4/AS160. Regulates transcription and chromatin structure by phosphorylating transcription regulators involved in energy metabolism such as CRTC2/TORC2, FOXO3, histone H2B, HDAC5, MEF2C, MLXIPL/ChREBP, EP300, HNF4A, p53/TP53, SREBF1, SREBF2 and PPARGC1A. Acts as a key regulator of glucose homeostasis in liver by phosphorylating CRTC2/TORC2, leading to CRTC2/TORC2 sequestration in the cytoplasm. In response to stress, phosphorylates 'Ser-36' of histone H2B (H2BS36ph), leading to promote transcription. Acts as a key regulator of cell growth and proliferation by phosphorylating FNIP1, TSC2, RPTOR, WDR24 and ATG1/ULK1: in response to nutrient limitation, negatively regulates the mTORC1 complex by phosphorylating RPTOR component of the mTORC1 complex and by phosphorylating and activating TSC2. Also phosphorylates and inhibits GATOR2 subunit WDR24 in response to nutrient limitation, leading to suppress glucose-mediated mTORC1 activation. In response to energetic stress, phosphorylates FNIP1, inactivating the non-canonical mTORC1 signaling, thereby promoting nuclear translocation of TFEB and TFE3, and inducing transcription of lysosomal or autophagy genes. In response to nutrient limitation, promotes autophagy by phosphorylating and activating ATG1/ULK1. In that process also activates WDR45/WIPI4. Phosphorylates CASP6, thereby preventing its autoprocessing and subsequent activation. AMPK also acts as a regulator of circadian rhythm by mediating phosphorylation of CRY1, leading to destabilize it. May regulate the Wnt signaling pathway by phosphorylating CTNNB1, leading to stabilize it. Also acts as a regulator of cellular polarity by remodeling the actin cytoskeleton; probably by indirectly activating myosin. Also phosphorylates CFTR, EEF2K, KLC1, NOS3 and SLC12A1. Plays an important role in the differential regulation of pro-autophagy (composed of PIK3C3, BECN1, PIK3R4 and UVRAG or ATG14) and non-autophagy (composed of PIK3C3, BECN1 and PIK3R4) complexes, in response to glucose starvation. Can inhibit the non-autophagy complex by phosphorylating PIK3C3 and can activate the pro-autophagy complex by phosphorylating BECN1. Upon glucose starvation, promotes ARF6 activation in a kinase-independent manner leading to cell migration. Upon glucose deprivation mediates the phosphorylation of ACSS2 at 'Ser-659', which exposes the nuclear localization signal of ACSS2, required for its interaction with KPNA1 and nuclear translocation. Upon stress, regulates mitochondrial fragmentation through phosphorylation of MTFR1L. The sequence is that of 5'-AMP-activated protein kinase catalytic subunit alpha-2 (PRKAA2) from Pongo abelii (Sumatran orangutan).